Here is a 433-residue protein sequence, read N- to C-terminus: Inorganic triphosphatase (433 aa).

The CYTH domain occupies 2 to 202; sequence AQEIELKFIV…ARGYHLAQGN (201 aa). Residues 218–433 enclose the CHAD domain; it reads KADVEQGLEA…EPFWLHSGKR (216 aa).

The catalysed reaction is triphosphate + H2O = phosphate + diphosphate. With respect to regulation, inhibited by calcium ion and activated by magnesium ion. In terms of biological role, involved in the hydrolysis of the beta-gamma-phosphoanhydride linkage of triphosphate-containing substrates (inorganic or nucleoside-linked). Catalyzes the hydrolysis of inorganic triphosphate (PPPi), which could be cytotoxic because of its high affinity for calcium ion, thereby interfering with calcium signaling. It also hydrolyzes slowly thiamine triphosphate (ThTP). YgiF is a specific PPPase, but it contributes only marginally to the total PPPase activity in E.coli, where the main enzyme responsible for hydrolysis of PPPi is inorganic pyrophosphatase (PPase). The chain is Inorganic triphosphatase (ygiF) from Escherichia coli (strain K12).